The following is a 73-amino-acid chain: UPF0346 protein Lreu_0775 (73 aa).

Belongs to the UPF0346 family.

This Limosilactobacillus reuteri (strain DSM 20016) (Lactobacillus reuteri) protein is UPF0346 protein Lreu_0775.